A 193-amino-acid chain; its full sequence is CASP-like protein 2U1 (193 aa).

Residues 1–18 lie on the Cytoplasmic side of the membrane; the sequence is MAMALALGGGQDAERKVK. A helical transmembrane segment spans residues 19–39; sequence VAEVALRALLCGLGALAAALV. Residues 40–61 are Extracellular-facing; the sequence is ATDTQTRTFFSLQKKASYTDMK. A helical membrane pass occupies residues 62–82; the sequence is AMVFLVDAAAVAAGYSLLQLA. The Cytoplasmic segment spans residues 83–113; the sequence is ARCCGGGAMSSGRGDGGGRGRALSWCVFSCD. The chain crosses the membrane as a helical span at residues 114–134; sequence QALAYVLLAAVAAALQASVVA. Topologically, residues 135–156 are extracellular; that stretch reads KRGQPELQWMGICALYGAFCRQ. Residues 157–177 traverse the membrane as a helical segment; it reads AGAGLATAVVAGLAAVLLAFL. Residues 178-193 are Cytoplasmic-facing; sequence SAFNLFRLYGSGGTKS.

This sequence belongs to the Casparian strip membrane proteins (CASP) family. Homodimer and heterodimers.

Its subcellular location is the cell membrane. This Sorghum bicolor (Sorghum) protein is CASP-like protein 2U1.